Here is a 388-residue protein sequence, read N- to C-terminus: MDSISVTNAKFCFDVFNEMKVHHVNENILYCPLSILTALAMVYLGARGNTESQMKKVLHFDSITGAGSTTDSQCGSSEYVHNLFKELLSEITRPNATYSLEIADKLYVDKTFSVLPEYLSCARKFYTGGVEEVNFKTAAEEARQLINSWVEKETNGQIKDLLVSSSIDFGTTMVFINTIYFKGIWKIAFNTEDTREMPFSMTKEESKPVQMMCMNNSFNVATLPAEKMKILELPYASGDLSMLVLLPDEVSGLERIEKTINFDKLREWTSTNAMAKKSMKVYLPRMKIEEKYNLTSILMALGMTDLFSRSANLTGISSVDNLMISDAVHGVFMEVNEEGTEATGSTGAIGNIKHSLELEEFRADHPFLFFIRYNPTNAILFFGRYWSP.

A disulfide bridge links Cys-74 with Cys-121. Residues Asn-95, Asn-215, Asn-293, and Asn-312 are each glycosylated (N-linked (GlcNAc...) asparagine).

Belongs to the serpin family. Ov-serpin subfamily. In terms of processing, N-glycosylated on at least two Asn residues by ovomucoid type carbohydrate units. Post-translationally, the N-terminus is blocked. Major protein of egg white. Expressed in the magnum of the oviduct (at protein level).

The protein resides in the secreted. The protein is Ovalbumin-related protein Y (SERPINB14B) of Gallus gallus (Chicken).